We begin with the raw amino-acid sequence, 218 residues long: Adenylate kinase (218 aa).

Residue 10–15 (GAGKGT) participates in ATP binding. An NMP region spans residues 30–59 (STGDMLRAAIAKGTPLGLSAQKIMESGGLV). AMP contacts are provided by residues Thr-31, Arg-36, 57 to 59 (GLV), 85 to 88 (GFPR), and Gln-92. Residues 122 to 159 (GRRIHQPSGRVYHVVNQPPKNPGVDDITGEPLIQRDDD) are LID. ATP is bound by residues Arg-123 and 132–133 (VY). Arg-156 and Arg-167 together coordinate AMP. Gly-203 lines the ATP pocket.

It belongs to the adenylate kinase family. Monomer.

The protein localises to the cytoplasm. It carries out the reaction AMP + ATP = 2 ADP. The protein operates within purine metabolism; AMP biosynthesis via salvage pathway; AMP from ADP: step 1/1. Functionally, catalyzes the reversible transfer of the terminal phosphate group between ATP and AMP. Plays an important role in cellular energy homeostasis and in adenine nucleotide metabolism. This chain is Adenylate kinase, found in Legionella pneumophila (strain Corby).